The sequence spans 485 residues: Homeobox protein unplugged (485 aa).

3 disordered regions span residues 1–65, 114–157, and 212–325; these read MERP…QEQE, PAGH…DTRF, and GMAQ…RRTA. Positions 54–64 are enriched in acidic residues; the sequence is RDQEQEAEQEQ. A compositionally biased stretch (low complexity) spans 114–128; that stretch reads PAGHPAAQQPQAQAQ. Composition is skewed to polar residues over residues 223–234 and 254–267; these read QAHSSPAKSGSH and DSCS…SPRN. The span at 284–293 shows a compositional bias: acidic residues; sequence DSEDCSDDEG. The segment covering 308–317 has biased composition (low complexity); sequence SQGNGSSSNS. Positions 319 to 378 form a DNA-binding region, homeobox; sequence SRRRRTAFTSEQLLELEREFHAKKYLSLTERSQIATSLKLSEVQVKIWFQNRRAKWKRVK.

As to expression, expressed in the neuroectodermal and mesectodermal cells at the ventral midline of stage 8 embryos, Subsequently, expression domains in the CNS widen and have their most anterior border in the posterior deutocerebrum. Oc/otd and unpg are mutual repressors at the interface of their brain-specific expression domains. Expression fades during germ band retraction and is then restricted to subset of cells by stage 14. Expressed in the founder cells of the cerebral branch within the first tracheal metamere. Outside the CNS, expression is seen in two clusters of ectodermal cells located laterally within the labial and first thoracic segments of stage 9 embryos. By stage 13, the expression is detected in a few cells close to the dorsal midline of the embryos.

It is found in the nucleus. Its function is as follows. Plays a regulatory role in neural branching of the tracheae: segment-specific aspects of these neural branching patterns appear to be generated by homeotic regulation of expression. May have a role with oc/otd in the postembryonic development of the brain. The chain is Homeobox protein unplugged from Drosophila melanogaster (Fruit fly).